A 114-amino-acid polypeptide reads, in one-letter code: T cell receptor beta variable 5-4 (114 aa).

A signal peptide spans 1–21; it reads MGPGLLCWALLCLLGAGSVET. The region spanning 22–114 is the Ig-like domain; sequence GVTQSPTHLI…SALYLCASSL (93 aa). A disulfide bridge links cysteine 42 with cysteine 110. Residue asparagine 90 is glycosylated (N-linked (GlcNAc...) asparagine).

Alpha-beta TR is a heterodimer composed of an alpha and beta chain; disulfide-linked. The alpha-beta TR is associated with the transmembrane signaling CD3 coreceptor proteins to form the TR-CD3 (TcR or TCR). The assembly of alpha-beta TR heterodimers with CD3 occurs in the endoplasmic reticulum where a single alpha-beta TR heterodimer associates with one CD3D-CD3E heterodimer, one CD3G-CD3E heterodimer and one CD247 homodimer forming a stable octameric structure. CD3D-CD3E and CD3G-CD3E heterodimers preferentially associate with TR alpha and TR beta chains, respectively. The association of the CD247 homodimer is the last step of TcR assembly in the endoplasmic reticulum and is required for transport to the cell surface.

The protein localises to the cell membrane. V region of the variable domain of T cell receptor (TR) beta chain that participates in the antigen recognition. Alpha-beta T cell receptors are antigen specific receptors which are essential to the immune response and are present on the cell surface of T lymphocytes. Recognize peptide-major histocompatibility (MH) (pMH) complexes that are displayed by antigen presenting cells (APC), a prerequisite for efficient T cell adaptive immunity against pathogens. Binding of alpha-beta TR to pMH complex initiates TR-CD3 clustering on the cell surface and intracellular activation of LCK that phosphorylates the ITAM motifs of CD3G, CD3D, CD3E and CD247 enabling the recruitment of ZAP70. In turn ZAP70 phosphorylates LAT, which recruits numerous signaling molecules to form the LAT signalosome. The LAT signalosome propagates signal branching to three major signaling pathways, the calcium, the mitogen-activated protein kinase (MAPK) kinase and the nuclear factor NF-kappa-B (NF-kB) pathways, leading to the mobilization of transcription factors that are critical for gene expression and essential for T cell growth and differentiation. The T cell repertoire is generated in the thymus, by V-(D)-J rearrangement. This repertoire is then shaped by intrathymic selection events to generate a peripheral T cell pool of self-MH restricted, non-autoaggressive T cells. Post-thymic interaction of alpha-beta TR with the pMH complexes shapes TR structural and functional avidity. This is T cell receptor beta variable 5-4 from Homo sapiens (Human).